We begin with the raw amino-acid sequence, 141 residues long: MAKKITGYIKLQIPAAKANPSPPIGPALGQHGVNIMEFCKAFNAKTQADEGTIIPVVITVYADRSFTFITKVPPMSVLIKKAVGIESGSSVPNKNKVGKLTREQVREIATKKLPDMNAASLEAAMRTVEGTARSMGVEIVN.

It belongs to the universal ribosomal protein uL11 family. In terms of assembly, part of the ribosomal stalk of the 50S ribosomal subunit. Interacts with L10 and the large rRNA to form the base of the stalk. L10 forms an elongated spine to which L12 dimers bind in a sequential fashion forming a multimeric L10(L12)X complex. Post-translationally, one or more lysine residues are methylated.

Forms part of the ribosomal stalk which helps the ribosome interact with GTP-bound translation factors. The polypeptide is Large ribosomal subunit protein uL11 (Geobacter sulfurreducens (strain ATCC 51573 / DSM 12127 / PCA)).